We begin with the raw amino-acid sequence, 564 residues long: Dihydroxy-acid dehydratase (564 aa).

A [2Fe-2S] cluster-binding site is contributed by Cys-53. Asp-85 is a Mg(2+) binding site. Cys-126 contributes to the [2Fe-2S] cluster binding site. The Mg(2+) site is built by Asp-127 and Lys-128. Position 128 is an N6-carboxylysine (Lys-128). Cys-203 serves as a coordination point for [2Fe-2S] cluster. Mg(2+) is bound at residue Glu-454. The active-site Proton acceptor is Ser-480.

Belongs to the IlvD/Edd family. As to quaternary structure, homodimer. [2Fe-2S] cluster serves as cofactor. Requires Mg(2+) as cofactor.

It catalyses the reaction (2R)-2,3-dihydroxy-3-methylbutanoate = 3-methyl-2-oxobutanoate + H2O. The catalysed reaction is (2R,3R)-2,3-dihydroxy-3-methylpentanoate = (S)-3-methyl-2-oxopentanoate + H2O. Its pathway is amino-acid biosynthesis; L-isoleucine biosynthesis; L-isoleucine from 2-oxobutanoate: step 3/4. It functions in the pathway amino-acid biosynthesis; L-valine biosynthesis; L-valine from pyruvate: step 3/4. Functions in the biosynthesis of branched-chain amino acids. Catalyzes the dehydration of (2R,3R)-2,3-dihydroxy-3-methylpentanoate (2,3-dihydroxy-3-methylvalerate) into 2-oxo-3-methylpentanoate (2-oxo-3-methylvalerate) and of (2R)-2,3-dihydroxy-3-methylbutanoate (2,3-dihydroxyisovalerate) into 2-oxo-3-methylbutanoate (2-oxoisovalerate), the penultimate precursor to L-isoleucine and L-valine, respectively. The protein is Dihydroxy-acid dehydratase of Mycobacterium ulcerans (strain Agy99).